The primary structure comprises 210 residues: Cytochrome c4 (210 aa).

The first 20 residues, 1–20, serve as a signal peptide directing secretion; that stretch reads MNKALVTLLLTLGITGLAHA. Positions 34, 37, 38, 86, 139, 142, 143, and 187 each coordinate heme c.

Binds 2 heme c groups covalently per subunit.

Its subcellular location is the periplasm. Its function is as follows. Diheme, high potential cytochrome c believed to be an intermediate electron donor to terminal oxidation systems. The chain is Cytochrome c4 (cycA) from Azotobacter vinelandii.